Consider the following 198-residue polypeptide: Ribonuclease HII (198 aa).

The 189-residue stretch at 10–198 (HLVAGVDEVG…PVKRALGLVS (189 aa)) folds into the RNase H type-2 domain. A divalent metal cation contacts are provided by Asp-16, Glu-17, and Asp-108.

The protein belongs to the RNase HII family. Requires Mn(2+) as cofactor. It depends on Mg(2+) as a cofactor.

It localises to the cytoplasm. It catalyses the reaction Endonucleolytic cleavage to 5'-phosphomonoester.. Endonuclease that specifically degrades the RNA of RNA-DNA hybrids. This Salmonella schwarzengrund (strain CVM19633) protein is Ribonuclease HII.